Reading from the N-terminus, the 155-residue chain is 6,7-dimethyl-8-ribityllumazine synthase (155 aa).

5-amino-6-(D-ribitylamino)uracil-binding positions include Phe-23, 57–59 (AFE), and 81–83 (AVI). Residue 86 to 87 (ST) participates in (2S)-2-hydroxy-3-oxobutyl phosphate binding. Catalysis depends on His-89, which acts as the Proton donor. Phe-114 lines the 5-amino-6-(D-ribitylamino)uracil pocket. Arg-128 provides a ligand contact to (2S)-2-hydroxy-3-oxobutyl phosphate.

The protein belongs to the DMRL synthase family.

The enzyme catalyses (2S)-2-hydroxy-3-oxobutyl phosphate + 5-amino-6-(D-ribitylamino)uracil = 6,7-dimethyl-8-(1-D-ribityl)lumazine + phosphate + 2 H2O + H(+). The protein operates within cofactor biosynthesis; riboflavin biosynthesis; riboflavin from 2-hydroxy-3-oxobutyl phosphate and 5-amino-6-(D-ribitylamino)uracil: step 1/2. Functionally, catalyzes the formation of 6,7-dimethyl-8-ribityllumazine by condensation of 5-amino-6-(D-ribitylamino)uracil with 3,4-dihydroxy-2-butanone 4-phosphate. This is the penultimate step in the biosynthesis of riboflavin. The sequence is that of 6,7-dimethyl-8-ribityllumazine synthase from Dehalococcoides mccartyi (strain ATCC BAA-2266 / KCTC 15142 / 195) (Dehalococcoides ethenogenes (strain 195)).